A 168-amino-acid polypeptide reads, in one-letter code: Ribosome maturation factor RimP (168 aa).

This sequence belongs to the RimP family.

Its subcellular location is the cytoplasm. In terms of biological role, required for maturation of 30S ribosomal subunits. The chain is Ribosome maturation factor RimP from Mycoplasma mobile (strain ATCC 43663 / 163K / NCTC 11711) (Mesomycoplasma mobile).